Reading from the N-terminus, the 354-residue chain is Elongation factor Ts (354 aa).

Residues 81-84 form an involved in Mg(2+) ion dislocation from EF-Tu region; it reads TDFV.

It belongs to the EF-Ts family.

It is found in the cytoplasm. Associates with the EF-Tu.GDP complex and induces the exchange of GDP to GTP. It remains bound to the aminoacyl-tRNA.EF-Tu.GTP complex up to the GTP hydrolysis stage on the ribosome. The sequence is that of Elongation factor Ts from Campylobacter concisus (strain 13826).